The chain runs to 105 residues: Cell division protein FtsL (105 aa).

The Cytoplasmic portion of the chain corresponds to 1–24 (MAEKMEKTGQILQMQLKRFSRVEK). Residues 25–45 (AFYFSIAVTTLIVAISIIFMQ) traverse the membrane as a helical segment. The Extracellular portion of the chain corresponds to 46 to 105 (TKLLQVQNDLTKINAQIEEKKTELDDAKQEVNELLRAERLKEIANSHDLQLNNENIRIAE).

The protein belongs to the FtsL family.

The protein resides in the cell membrane. Its function is as follows. Essential cell division protein. This chain is Cell division protein FtsL, found in Streptococcus pneumoniae (strain ATCC BAA-255 / R6).